Here is a 321-residue protein sequence, read N- to C-terminus: Cytochrome f (321 aa).

Positions 1-35 are cleaved as a signal peptide; it reads MQNRNKNNWMKKWVIRSISILIILNIIAWPSISYA. The heme site is built by Tyr-36, Cys-56, Cys-59, and His-60. Residues 287–306 form a helical membrane-spanning segment; it reads IQGLLLFFVSVIMAQILLVL.

The protein belongs to the cytochrome f family. In terms of assembly, the 4 large subunits of the cytochrome b6-f complex are cytochrome b6, subunit IV (17 kDa polypeptide, petD), cytochrome f and the Rieske protein, while the 4 small subunits are PetG, PetL, PetM and PetN. The complex functions as a dimer. The cofactor is heme.

The protein resides in the plastid. The protein localises to the chloroplast thylakoid membrane. In terms of biological role, component of the cytochrome b6-f complex, which mediates electron transfer between photosystem II (PSII) and photosystem I (PSI), cyclic electron flow around PSI, and state transitions. The polypeptide is Cytochrome f (Psilotum nudum (Whisk fern)).